The primary structure comprises 372 residues: C-X-C chemokine receptor type 5 (372 aa).

Residues 1-55 (MNYPLTLEMDLENLEDLFWELDRLDNYNDTSLVENHLCPATEGPLMASFKAVFVP) lie on the Extracellular side of the membrane. A glycan (N-linked (GlcNAc...) asparagine) is linked at asparagine 28. The helical transmembrane segment at 56–76 (VAYSLIFLLGVIGNVLVLVIL) threads the bilayer. Residues 77-88 (ERHRQTRSSTET) are Cytoplasmic-facing. A helical membrane pass occupies residues 89 to 109 (FLFHLAVADLLLVFILPFAVA). The Extracellular portion of the chain corresponds to 110 to 124 (EGSVGWVLGTFLCKT). Cysteine 122 and cysteine 202 form a disulfide bridge. A helical transmembrane segment spans residues 125 to 145 (VIALHKVNFYCSSLLLACIAV). Residues 146-167 (DRYLAIVHAVHAYRHRRLLSIH) lie on the Cytoplasmic side of the membrane. Residues 168–188 (ITCGTIWLVGFLLALPEILFA) traverse the membrane as a helical segment. At 189-219 (KVSQGHHNNSLPRCTFSQENQAETHAWFTSR) the chain is on the extracellular side. Residue asparagine 196 is glycosylated (N-linked (GlcNAc...) asparagine). A helical transmembrane segment spans residues 220-240 (FLYHVAGFLLPMLVMGWCYVG). Over 241 to 259 (VVHRLRQAQRRPQRQKAVR) the chain is Cytoplasmic. The helical transmembrane segment at 260-280 (VAILVTSIFFLCWSPYHIVIF) threads the bilayer. Residues 281-304 (LDTLARLKAVDNTCKLNGSLPVAI) lie on the Extracellular side of the membrane. A helical transmembrane segment spans residues 305-325 (TMCEFLGLAHCCLNPMLYTFA). At 326–372 (GVKFRSDLSRLLTKLGCTGPASLCQLFPSWRRSSLSESENATSLTTF) the chain is on the cytoplasmic side.

It belongs to the G-protein coupled receptor 1 family. As to expression, expression in mature B-cells and Burkitt lymphoma cells.

The protein resides in the cell membrane. In terms of biological role, cytokine receptor that binds to B-lymphocyte chemoattractant (BLC). Involved in B-cell migration into B-cell follicles of spleen and Peyer patches but not into those of mesenteric or peripheral lymph nodes. May have a regulatory function in Burkitt lymphoma (BL) lymphomagenesis and/or B-cell differentiation. The polypeptide is C-X-C chemokine receptor type 5 (CXCR5) (Homo sapiens (Human)).